The following is a 325-amino-acid chain: Phosphate acyltransferase (325 aa).

The protein belongs to the PlsX family. Homodimer. Probably interacts with PlsY.

The protein localises to the cytoplasm. It carries out the reaction a fatty acyl-[ACP] + phosphate = an acyl phosphate + holo-[ACP]. The protein operates within lipid metabolism; phospholipid metabolism. Catalyzes the reversible formation of acyl-phosphate (acyl-PO(4)) from acyl-[acyl-carrier-protein] (acyl-ACP). This enzyme utilizes acyl-ACP as fatty acyl donor, but not acyl-CoA. This Staphylococcus epidermidis (strain ATCC 35984 / DSM 28319 / BCRC 17069 / CCUG 31568 / BM 3577 / RP62A) protein is Phosphate acyltransferase.